We begin with the raw amino-acid sequence, 397 residues long: Cytochrome b (397 aa).

A run of 4 helical transmembrane segments spans residues 38–58 (FGSL…FLAM), 82–104 (WLLR…LHIF), 119–139 (VWCL…IGYV), and 185–205 (FFSL…LHLA). Positions 88 and 102 each coordinate heme b. Histidine 189 and histidine 203 together coordinate heme b. Residue histidine 208 participates in a ubiquinone binding. The next 4 membrane-spanning stretches (helical) occupy residues 231 to 251 (FYVK…IWIF), 295 to 315 (AGGV…PFFK), 327 to 347 (IYQG…WIGC), and 354 to 373 (FVTI…AITP).

It belongs to the cytochrome b family. As to quaternary structure, the main subunits of complex b-c1 are: cytochrome b, cytochrome c1 and the Rieske protein. It depends on heme b as a cofactor.

It is found in the mitochondrion inner membrane. Its function is as follows. Component of the ubiquinol-cytochrome c reductase complex (complex III or cytochrome b-c1 complex) that is part of the mitochondrial respiratory chain. The b-c1 complex mediates electron transfer from ubiquinol to cytochrome c. Contributes to the generation of a proton gradient across the mitochondrial membrane that is then used for ATP synthesis. In Oryza sativa subsp. indica (Rice), this protein is Cytochrome b (MT-CYB).